The following is a 178-amino-acid chain: Cytochrome b6-f complex iron-sulfur subunit 1 (178 aa).

Residues 17 to 36 form a helical membrane-spanning segment; that stretch reads LLNFLAGTTVAVTASAGAYA. One can recognise a Rieske domain in the interval 61-161; the sequence is GNPIPASQIL…VAVVDDQIFI (101 aa). The [2Fe-2S] cluster site is built by Cys-107, His-109, Cys-125, and His-128. A disulfide bridge links Cys-112 with Cys-127.

Belongs to the Rieske iron-sulfur protein family. As to quaternary structure, the 4 large subunits of the cytochrome b6-f complex are cytochrome b6, subunit IV (17 kDa polypeptide, PetD), cytochrome f and the Rieske protein, while the 4 small subunits are PetG, PetL, PetM and PetN. The complex functions as a dimer. [2Fe-2S] cluster is required as a cofactor.

It localises to the cellular thylakoid membrane. The catalysed reaction is 2 oxidized [plastocyanin] + a plastoquinol + 2 H(+)(in) = 2 reduced [plastocyanin] + a plastoquinone + 4 H(+)(out). Its function is as follows. Component of the cytochrome b6-f complex, which mediates electron transfer between photosystem II (PSII) and photosystem I (PSI), cyclic electron flow around PSI, and state transitions. The polypeptide is Cytochrome b6-f complex iron-sulfur subunit 1 (Synechocystis sp. (strain ATCC 27184 / PCC 6803 / Kazusa)).